The following is a 453-amino-acid chain: Pentatricopeptide repeat-containing protein At2g38420, mitochondrial (453 aa).

A mitochondrion-targeting transit peptide spans 1–77; sequence MARSSSWHRM…CEPTPQAYRF (77 aa). 9 PPR repeats span residues 107-141, 142-177, 178-212, 213-249, 250-284, 285-319, 320-354, 355-389, and 390-424; these read PESI…RCVP, SAYT…GVRL, EEST…SVIV, DPRL…RFSP, GLRD…RVEP, DLVC…GLAP, DVYT…GSEP, NVVT…GVNR, and NSHT…NVFV.

Belongs to the PPR family. P subfamily.

Its subcellular location is the mitochondrion. This chain is Pentatricopeptide repeat-containing protein At2g38420, mitochondrial, found in Arabidopsis thaliana (Mouse-ear cress).